We begin with the raw amino-acid sequence, 1088 residues long: PAN2-PAN3 deadenylation complex catalytic subunit pan2 (1088 aa).

4 WD repeats span residues 16 to 56 (VSTC…YTQF), 136 to 175 (HKDKNVSDIFIMRRNRLLCCGSTNGEIILRDPNSFQPVNK), 178 to 224 (AHTG…SLVP), and 270 to 309 (PLTSYLTGMDIASTGDAMVFTDVEDNIHLWSPLENPSFSD). The tract at residues 309 to 443 (DLKLPIQLPN…EDTISGPDSI (135 aa)) is linker. The USP domain maps to 443–814 (IPKFYQRPVI…IPIIVYYEKL (372 aa)). The Exonuclease domain occupies 860 to 1033 (VGIDSEFVAL…EDALTALKLY (174 aa)). Positions 863, 865, 972, and 1025 each coordinate a divalent metal cation.

The protein belongs to the peptidase C19 family. PAN2 subfamily. As to quaternary structure, forms a heterotrimer with an asymmetric homodimer of the regulatory subunit ppk26/pan3 to form the poly(A)-nuclease (PAN) deadenylation complex. A divalent metal cation is required as a cofactor.

The protein resides in the cytoplasm. It catalyses the reaction Exonucleolytic cleavage of poly(A) to 5'-AMP.. Positively regulated by the regulatory subunit ppk26/pan3. Its function is as follows. Catalytic subunit of the poly(A)-nuclease (PAN) deadenylation complex, one of two cytoplasmic mRNA deadenylases involved in mRNA turnover. PAN specifically shortens poly(A) tails of RNA and the activity is stimulated by poly(A)-binding protein pab1. PAN deadenylation is followed by rapid degradation of the shortened mRNA tails by the CCR4-NOT complex. Deadenylated mRNAs are then degraded by two alternative mechanisms, namely exosome-mediated 3'-5' exonucleolytic degradation, or deadenylation-dependent mRNA decaping and subsequent 5'-3' exonucleolytic degradation by xrn1. May also be involved in post-transcriptional maturation of mRNA poly(A) tails. The sequence is that of PAN2-PAN3 deadenylation complex catalytic subunit pan2 from Schizosaccharomyces pombe (strain 972 / ATCC 24843) (Fission yeast).